Consider the following 146-residue polypeptide: Hemoglobin subunit beta-1 (146 aa).

One can recognise a Globin domain in the interval Gly2–His146. The heme b site is built by His63 and His92.

This sequence belongs to the globin family. As to quaternary structure, heterotetramer of two alpha chains and two beta chains. As to expression, red blood cells.

In terms of biological role, involved in oxygen transport from the lung to the various peripheral tissues. In Xenopus borealis (Kenyan clawed frog), this protein is Hemoglobin subunit beta-1 (hbb1).